Consider the following 129-residue polypeptide: Small ribosomal subunit protein uS11 (129 aa).

It belongs to the universal ribosomal protein uS11 family. In terms of assembly, part of the 30S ribosomal subunit. Interacts with proteins S7 and S18. Binds to IF-3.

Functionally, located on the platform of the 30S subunit, it bridges several disparate RNA helices of the 16S rRNA. Forms part of the Shine-Dalgarno cleft in the 70S ribosome. In Geobacillus kaustophilus (strain HTA426), this protein is Small ribosomal subunit protein uS11.